A 219-amino-acid polypeptide reads, in one-letter code: Sugar fermentation stimulation protein homolog (219 aa).

This sequence belongs to the SfsA family.

In Archaeoglobus fulgidus (strain ATCC 49558 / DSM 4304 / JCM 9628 / NBRC 100126 / VC-16), this protein is Sugar fermentation stimulation protein homolog.